A 236-amino-acid polypeptide reads, in one-letter code: Thiamine import ATP-binding protein ThiQ (236 aa).

One can recognise an ABC transporter domain in the interval 2-230; it reads LKLEKITYLY…SAAKASVLGI (229 aa). 32-39 serves as a coordination point for ATP; sequence GPSGAGKS.

It belongs to the ABC transporter superfamily. Thiamine importer (TC 3.A.1.19.1) family. The complex is composed of two ATP-binding proteins (ThiQ), two transmembrane proteins (ThiP) and a solute-binding protein (ThiB).

It is found in the cell inner membrane. The enzyme catalyses thiamine(out) + ATP + H2O = thiamine(in) + ADP + phosphate + H(+). Its function is as follows. Part of the ABC transporter complex ThiBPQ involved in thiamine import. Responsible for energy coupling to the transport system. The chain is Thiamine import ATP-binding protein ThiQ from Yersinia pestis bv. Antiqua (strain Antiqua).